Here is a 337-residue protein sequence, read N- to C-terminus: Glycine N(alpha)-acyltransferase (337 aa).

It belongs to the acetyltransferase family.

It catalyses the reaction a (3R)-hydroxyacyl-[ACP] + glycine = a lyso-glycine lipid + holo-[ACP] + H(+). It carries out the reaction (3R)-hydroxyhexadecanoyl-[ACP] + glycine = N-[(3R)-3-hydroxyhexadecanoyl]-glycine + holo-[ACP] + H(+). It participates in lipid metabolism. In terms of biological role, is involved in the production of glycine lipids (GL), which are phosphorus-free membrane lipids important for fitness during growth of the human gut bacterium B.thetaiotaomicron in vivo and in vitro. Catalyzes the first step of GL biosynthesis, i.e. the N-acylation of glycine via addition of a 3-hydroxy fatty acyl group, to form a range of monoacylated glycine (also named lyso-glycine lipids or lyso-GL). Is important for the ability of B.thetaiotaomicron to adapt to stress and colonize the mammalian gut. Also seems to be required for the production of flavolipin, an acylated serine-glycine dipeptide. The chain is Glycine N(alpha)-acyltransferase from Bacteroides thetaiotaomicron (strain ATCC 29148 / DSM 2079 / JCM 5827 / CCUG 10774 / NCTC 10582 / VPI-5482 / E50).